Here is a 507-residue protein sequence, read N- to C-terminus: ATP synthase subunit alpha, chloroplastic (507 aa).

Residue 170-177 (GDRQTGKT) coordinates ATP.

It belongs to the ATPase alpha/beta chains family. F-type ATPases have 2 components, CF(1) - the catalytic core - and CF(0) - the membrane proton channel. CF(1) has five subunits: alpha(3), beta(3), gamma(1), delta(1), epsilon(1). CF(0) has four main subunits: a, b, b' and c.

The protein localises to the plastid. It is found in the chloroplast thylakoid membrane. The enzyme catalyses ATP + H2O + 4 H(+)(in) = ADP + phosphate + 5 H(+)(out). Functionally, produces ATP from ADP in the presence of a proton gradient across the membrane. The alpha chain is a regulatory subunit. The chain is ATP synthase subunit alpha, chloroplastic from Nymphaea alba (White water-lily).